We begin with the raw amino-acid sequence, 3413 residues long: Protein pecanex (3413 aa).

Transmembrane regions (helical) follow at residues 33–53 and 57–77; these read VVHLYLWLYLLCSPFVAYLYF and WLTWCLYCVITSLTILMVKLA. A glycan (N-linked (GlcNAc...) asparagine) is linked at N164. The segment covering 182–195 has biased composition (low complexity); sequence GSQQDQQSLAGSAS. Disordered regions lie at residues 182–213 and 235–314; these read GSQQDQQSLAGSASVSKSIRSTGPGGNSSTSA and GSSA…ENKL. Polar residues predominate over residues 196–213; the sequence is VSKSIRSTGPGGNSSTSA. N208 is a glycosylation site (N-linked (GlcNAc...) asparagine). Over residues 302–312 the composition is skewed to low complexity; sequence AAAAANSNAEN. A glycan (N-linked (GlcNAc...) asparagine) is linked at N317. Disordered regions lie at residues 327–363, 379–403, 540–609, and 625–651; these read PSFLHSQPTNKARGQTNPRQHFITSAPSTGIGGGDAP, LVNPGRSSRLQRHRSSETHDERLKH, PGTG…GTGG, and PSVSNLSPHPNSVEAISGQQQMRNPLP. A compositionally biased stretch (polar residues) spans 330–354; that stretch reads LHSQPTNKARGQTNPRQHFITSAPS. A compositionally biased stretch (basic and acidic residues) spans 392–402; it reads RSSETHDERLK. Over residues 541 to 559 the composition is skewed to gly residues; it reads GTGGSVTGGGGAAGGGGSA. 2 N-linked (GlcNAc...) asparagine glycosylation sites follow: N569 and N581. Residues 569–582 show a composition bias toward polar residues; sequence NATSYKHGSSQSNK. Residues 599–609 show a composition bias toward gly residues; sequence GTSGGAGGTGG. The span at 625 to 634 shows a compositional bias: polar residues; it reads PSVSNLSPHP. N685 carries an N-linked (GlcNAc...) asparagine glycan. Over residues 720–730 the composition is skewed to basic and acidic residues; that stretch reads EKTAHEEHGDD. 4 disordered regions span residues 720-745, 816-873, 886-921, and 1002-1021; these read EKTAHEEHGDDCLGIGQGNADDDDEV, HHHS…NRQP, RQELSHQSGAVIPAPNPPVPIRSEADSGCPSSDCEQ, and KQTKQASRNSSSSNSTHSIS. The span at 816-826 shows a compositional bias: basic residues; the sequence is HHHSHLHHHKA. Positions 828-846 are enriched in low complexity; sequence SVEGAGPSGGSVAVGVSAG. A compositionally biased stretch (acidic residues) spans 847 to 856; the sequence is NDDEDEETED. N857 carries an N-linked (GlcNAc...) asparagine glycan. Positions 1008 to 1021 are enriched in low complexity; sequence SRNSSSSNSTHSIS. 4 N-linked (GlcNAc...) asparagine glycosylation sites follow: N1010, N1015, N1069, and N1199. The next 2 membrane-spanning stretches (helical) occupy residues 1315–1335 and 1343–1363; these read MHVLLASLLCTLVACLGAAIL and LCALLFCAVIAGAQYSLVKSV. A glycan (N-linked (GlcNAc...) asparagine) is linked at N1375. A run of 4 helical transmembrane segments spans residues 1376-1396, 1423-1443, 1474-1494, and 1504-1524; these read KTVAYSRAIYFCLAGGMLLLL, VVALLLQALYILLLCFPIIFS, LLGSFLCVVRSVLAVMLLYGP, and GTQYILFSIFCAMLVPLGYHL. An N-linked (GlcNAc...) asparagine glycan is attached at N1572. Disordered regions lie at residues 1577-1675, 1722-1744, and 1760-1813; these read QLTT…TGEP, DKISSSSATNPGDMSTLTAGAGT, and AEAE…LPDP. Composition is skewed to basic and acidic residues over residues 1587–1598 and 1607–1620; these read RQTDVKTEHEQI and TVNEEHHEKDHGAD. Over residues 1639–1666 the composition is skewed to low complexity; the sequence is KTSSLGSSQQTLGKTISSSKRAITASSS. Residues 1725–1738 show a composition bias toward polar residues; the sequence is SSSSATNPGDMSTL. Tandem repeats lie at residues 1776–1777, 1778–1779, 1780–1781, 1782–1783, and 1784–1785. Residues 1776-1785 are 5 X 2 AA tandem repeats of G-T; sequence GTGTGTGTGT. N-linked (GlcNAc...) asparagine glycosylation is found at N1791 and N1804. Over residues 1799–1808 the composition is skewed to low complexity; it reads GNTNSNGTGN. 5 helical membrane passes run 1830–1850, 1856–1876, 1914–1934, 1940–1960, and 1976–1996; these read LVVMTLLAVSVLGLHCSTVFT, LNVVLYSFIGVLGLLLHYIVP, LYIYLSVLERNVLFPLLAISS, QLIVAKFGLPWGTLIVAICAL, and IIIFTVLLFRIDFAMATETFI. A disordered region spans residues 2344 to 2463; sequence SMGGAPPAQA…HSFANISRQT (120 aa). Residues 2346 to 2370 show a composition bias toward low complexity; the sequence is GGAPPAQAPAAAGGASSAPATAGVA. Residues N2380 and N2387 are each glycosylated (N-linked (GlcNAc...) asparagine). Low complexity predominate over residues 2389-2411; the sequence is SAHGGQAGPSSGQSKSQSQQQLR. Over residues 2437-2447 the composition is skewed to gly residues; that stretch reads GTGGVTGGGGD. Positions 2449–2463 are enriched in polar residues; the sequence is QLSSSHSFANISRQT. N2458, N2619, and N2717 each carry an N-linked (GlcNAc...) asparagine glycan. 2 disordered regions span residues 2908–2997 and 3198–3242; these read LNRE…SSGS and ESST…GDDG. The span at 2940-2956 shows a compositional bias: basic and acidic residues; it reads RRPEVGSSRGRDHERRA. N-linked (GlcNAc...) asparagine glycosylation occurs at N3246. Residues 3295 to 3413 form a disordered region; it reads AEESKEKGTA…NGESEAGTTV (119 aa). Residues 3310 to 3323 are compositionally biased toward acidic residues; the sequence is EGEEGVGEMEIEPE. Low complexity predominate over residues 3364–3377; it reads TSSTSSAKSTSSPS. Over residues 3380–3406 the composition is skewed to acidic residues; the sequence is QEEEDAVDPEETPELASEESPSDENGE.

Belongs to the pecanex family.

Its subcellular location is the membrane. Functionally, involved in neurogenesis. The polypeptide is Protein pecanex (pcx) (Drosophila melanogaster (Fruit fly)).